A 373-amino-acid chain; its full sequence is UBX domain-containing protein 1 (373 aa).

Disordered regions lie at residues 39 to 179 (VTEF…QIPR) and 236 to 293 (IKQH…VDES). The span at 49-59 (TAGSSEPTGQP) shows a compositional bias: polar residues. 2 stretches are compositionally biased toward low complexity: residues 60–71 (SAKSSSSTPRES) and 85–94 (LGDLASGAAD). A compositionally biased stretch (acidic residues) spans 95–104 (SSDDDDDENQ). The segment covering 121–132 (DDLKKKIIEKAR) has biased composition (basic and acidic residues). Positions 185 to 258 (LHFWADGFSV…KYQPFAGKGQ (74 aa)) constitute an SEP domain. The region spanning 292-369 (ESQPVVTLQI…PEFKRGGVVV (78 aa)) is the UBX domain.

In terms of biological role, involved in CDC48-dependent protein degradation through the ubiquitin/proteasome pathway. The chain is UBX domain-containing protein 1 (ubx1) from Emericella nidulans (strain FGSC A4 / ATCC 38163 / CBS 112.46 / NRRL 194 / M139) (Aspergillus nidulans).